We begin with the raw amino-acid sequence, 415 residues long: Tyrosine--tRNA ligase (415 aa).

Tyr-40 is a binding site for L-tyrosine. Positions 45-54 (ATAKSLHVGS) match the 'HIGH' region motif. The L-tyrosine site is built by Tyr-178 and Gln-182. The 'KMSKS' region signature appears at 238-242 (KMGKS). Residue Lys-241 participates in ATP binding. Positions 350-414 (ASIVQLIVKT…GKKRHALVQL (65 aa)) constitute an S4 RNA-binding domain.

It belongs to the class-I aminoacyl-tRNA synthetase family. TyrS type 1 subfamily. As to quaternary structure, homodimer.

Its subcellular location is the cytoplasm. It catalyses the reaction tRNA(Tyr) + L-tyrosine + ATP = L-tyrosyl-tRNA(Tyr) + AMP + diphosphate + H(+). Functionally, catalyzes the attachment of tyrosine to tRNA(Tyr) in a two-step reaction: tyrosine is first activated by ATP to form Tyr-AMP and then transferred to the acceptor end of tRNA(Tyr). In Ruegeria pomeroyi (strain ATCC 700808 / DSM 15171 / DSS-3) (Silicibacter pomeroyi), this protein is Tyrosine--tRNA ligase.